Reading from the N-terminus, the 285-residue chain is NADPH-dependent 7-cyano-7-deazaguanine reductase (285 aa).

Substrate is bound at residue isoleucine 91–serine 93. Residue serine 93 to lysine 94 coordinates NADPH. The Thioimide intermediate role is filled by cysteine 191. Catalysis depends on aspartate 198, which acts as the Proton donor. Histidine 230–glutamate 231 lines the substrate pocket. Residue arginine 259–glycine 260 coordinates NADPH.

Belongs to the GTP cyclohydrolase I family. QueF type 2 subfamily. Homodimer.

Its subcellular location is the cytoplasm. The catalysed reaction is 7-aminomethyl-7-carbaguanine + 2 NADP(+) = 7-cyano-7-deazaguanine + 2 NADPH + 3 H(+). It functions in the pathway tRNA modification; tRNA-queuosine biosynthesis. Its function is as follows. Catalyzes the NADPH-dependent reduction of 7-cyano-7-deazaguanine (preQ0) to 7-aminomethyl-7-deazaguanine (preQ1). This is NADPH-dependent 7-cyano-7-deazaguanine reductase from Legionella pneumophila (strain Corby).